Consider the following 155-residue polypeptide: Ribosomal RNA large subunit methyltransferase H (155 aa).

Residues leucine 72, glycine 104, and leucine 123–phenylalanine 128 each bind S-adenosyl-L-methionine.

Belongs to the RNA methyltransferase RlmH family. In terms of assembly, homodimer.

The protein resides in the cytoplasm. The catalysed reaction is pseudouridine(1915) in 23S rRNA + S-adenosyl-L-methionine = N(3)-methylpseudouridine(1915) in 23S rRNA + S-adenosyl-L-homocysteine + H(+). Specifically methylates the pseudouridine at position 1915 (m3Psi1915) in 23S rRNA. In Kosmotoga olearia (strain ATCC BAA-1733 / DSM 21960 / TBF 19.5.1), this protein is Ribosomal RNA large subunit methyltransferase H.